A 284-amino-acid chain; its full sequence is Ribose-phosphate pyrophosphokinase (284 aa).

ATP contacts are provided by residues 34 to 36 and 92 to 93; these read DNE and RQ. The Mg(2+) site is built by histidine 125 and aspartate 163. Lysine 186 is a catalytic residue. D-ribose 5-phosphate is bound by residues arginine 188, aspartate 212, and 216-220; that span reads STGGT.

It belongs to the ribose-phosphate pyrophosphokinase family. Class III (archaeal) subfamily. Homotetramer. Requires Mg(2+) as cofactor.

It localises to the cytoplasm. It carries out the reaction D-ribose 5-phosphate + ATP = 5-phospho-alpha-D-ribose 1-diphosphate + AMP + H(+). The protein operates within metabolic intermediate biosynthesis; 5-phospho-alpha-D-ribose 1-diphosphate biosynthesis; 5-phospho-alpha-D-ribose 1-diphosphate from D-ribose 5-phosphate (route I): step 1/1. Its activity is regulated as follows. Activated by inorganic phosphate, with a maximal activity at 190 mM. Above this concentration inorganic phosphate progressively inhibits the kinase. Completely inhibited by ADP, and partially inhibited by alpha,beta-methylene ATP (mATP). Lack of allosteric regulation. Involved in the biosynthesis of the central metabolite phospho-alpha-D-ribosyl-1-pyrophosphate (PRPP) via the transfer of pyrophosphoryl group from ATP to 1-hydroxyl of ribose-5-phosphate (Rib-5-P). It can also use dATP as diphosphoryl donor. The sequence is that of Ribose-phosphate pyrophosphokinase from Methanocaldococcus jannaschii (strain ATCC 43067 / DSM 2661 / JAL-1 / JCM 10045 / NBRC 100440) (Methanococcus jannaschii).